The primary structure comprises 296 residues: Nitrogenase iron protein (296 aa).

12-19 contributes to the ATP binding site; sequence GKGGIGKS. C100 provides a ligand contact to [4Fe-4S] cluster. An ADP-ribosylarginine; by dinitrogenase reductase ADP-ribosyltransferase modification is found at R103. C134 contacts [4Fe-4S] cluster.

The protein belongs to the NifH/BchL/ChlL family. As to quaternary structure, homodimer. The cofactor is [4Fe-4S] cluster. Post-translationally, the reversible ADP-ribosylation of Arg-103 inactivates the nitrogenase reductase and regulates nitrogenase activity.

The catalysed reaction is N2 + 8 reduced [2Fe-2S]-[ferredoxin] + 16 ATP + 16 H2O = H2 + 8 oxidized [2Fe-2S]-[ferredoxin] + 2 NH4(+) + 16 ADP + 16 phosphate + 6 H(+). Functionally, the key enzymatic reactions in nitrogen fixation are catalyzed by the nitrogenase complex, which has 2 components: the iron protein and the molybdenum-iron protein. The chain is Nitrogenase iron protein from Acidithiobacillus ferrooxidans (strain ATCC 23270 / DSM 14882 / CIP 104768 / NCIMB 8455) (Ferrobacillus ferrooxidans (strain ATCC 23270)).